The sequence spans 158 residues: NAD(P)H-quinone oxidoreductase subunit J, chloroplastic (158 aa).

It belongs to the complex I 30 kDa subunit family. NDH is composed of at least 16 different subunits, 5 of which are encoded in the nucleus.

The protein localises to the plastid. It is found in the chloroplast thylakoid membrane. It carries out the reaction a plastoquinone + NADH + (n+1) H(+)(in) = a plastoquinol + NAD(+) + n H(+)(out). It catalyses the reaction a plastoquinone + NADPH + (n+1) H(+)(in) = a plastoquinol + NADP(+) + n H(+)(out). Its function is as follows. NDH shuttles electrons from NAD(P)H:plastoquinone, via FMN and iron-sulfur (Fe-S) centers, to quinones in the photosynthetic chain and possibly in a chloroplast respiratory chain. The immediate electron acceptor for the enzyme in this species is believed to be plastoquinone. Couples the redox reaction to proton translocation, and thus conserves the redox energy in a proton gradient. The protein is NAD(P)H-quinone oxidoreductase subunit J, chloroplastic of Aethionema cordifolium (Lebanon stonecress).